A 473-amino-acid polypeptide reads, in one-letter code: Protein translocase subunit SecA (473 aa).

Asp127 lines the ATP pocket. Residues 424 to 447 (VAEGKAVHQDTSKQEPKKKQPIRK) form a disordered region. Zn(2+) contacts are provided by Cys457, Cys459, Cys468, and Cys469.

Belongs to the SecA family. As to quaternary structure, monomer and homodimer. Part of the essential Sec protein translocation apparatus which comprises SecA, SecYEG and auxiliary proteins SecDF. Other proteins may also be involved. Requires Zn(2+) as cofactor.

The protein resides in the cell membrane. The protein localises to the cytoplasm. It catalyses the reaction ATP + H2O + cellular proteinSide 1 = ADP + phosphate + cellular proteinSide 2.. Its function is as follows. Part of the Sec protein translocase complex. Interacts with the SecYEG preprotein conducting channel. Has a central role in coupling the hydrolysis of ATP to the transfer of proteins into and across the cell membrane, serving as an ATP-driven molecular motor driving the stepwise translocation of polypeptide chains across the membrane. In Cytobacillus firmus (Bacillus firmus), this protein is Protein translocase subunit SecA.